The following is a 965-amino-acid chain: MLPGRLCLVPLLLALGVGSGGGSGDGGDSRRRRLLAAKVNKHKPWIETSYHGVITENNDTVILDPTIVALDKDAPVPFAGEICAFKIHGQELPFEAVVLNKTSGEGRLRAKSPIDCELQKEYTFIIQAYDCGAGPQEAAWKKSHKAVVHIQVKDVNEFAPTFKEPAYKAIVTEGKIYDSILQVEAIDEDCSPQYSQICNYEIVTTDVPFAIDRNGNIRNTEKLSYDKQRQYEILVTAYDCGQKPAAQDTLVQVDVKPVCKPGWQDWTKRIEYQPGSGSMPLFPGIHLETCDGAVSSLQVTAELQTNYIGKGCDRETYSEKSLQKLCGASSGIIDLLPSPSAATNWTAGLLVDSSEMIFKFDGRQGAKIPDGIVPKNLTDQFTITMWMKHGPSPGVRAEKETILCNSDKTEMNRHHYALYVHNCRLVFLLRKDFDQADTFRPAEFHWKLDQICDKEWHYYVINVEFPVVTLYMDGATYEPYLVTNDWPIHPSHIAMQLTVGACWQGGEVAKPRFAQFFHGSLASLTIRPGKMESQKVISCLQACKEGLDINSLESLGRGIKYHFNPSQSILVMEGDDIGNINQALQKVSYINSRQFPTAGVRRLRLSSKVQCFGEDVCISIPDVDAYIMVLQAIEPQITLQGTERFWRPAAQFESARGVTLFPDIKIISTFAKTEASGDLRATGTAPKSAVLEEMLHNLDFCDILVLGGDLDPRQECLELNHSELHQRHLDATNSTAGYSIYGVGSMSRYEQVLHHLRYRNWHPTSLETRRFQIKCSELNGRYTSNEFNLEVSVLHEVRVSDTEHVNHLIVQPPFLQSVYHPETRSSIQRSSVVPSIATVVIIISVCMLVFVVAMGVYRVRIAHQHFIQETEAAKEAEMDWDDSALTITVNPMEKHEGPGHGEDETEGEEEEEAEEGMSSSSSGSDDSEEEEEEGMGRVRHGQSGTSSQRPERSTWNTAGVINIWK.

Residues 1–20 (MLPGRLCLVPLLLALGVGSG) form the signal peptide. The Extracellular portion of the chain corresponds to 21–835 (GGSGDGGDSR…SIQRSSVVPS (815 aa)). 2 consecutive Cadherin domains span residues 46–162 (IETS…APTF) and 163–282 (KEPA…MPLF). Asn58 and Asn100 each carry an N-linked (GlcNAc...) asparagine glycan. N-linked (GlcNAc...) asparagine glycans are attached at residues Asn344, Asn376, Asn720, and Asn733. Residues 836–856 (IATVVIIISVCMLVFVVAMGV) traverse the membrane as a helical segment. At 857–965 (YRVRIAHQHF…NTAGVINIWK (109 aa)) the chain is on the cytoplasmic side. The segment at 891 to 965 (PMEKHEGPGH…NTAGVINIWK (75 aa)) is disordered. The segment covering 892–902 (MEKHEGPGHGE) has biased composition (basic and acidic residues). Over residues 903-915 (DETEGEEEEEAEE) the composition is skewed to acidic residues. Over residues 942–959 (QSGTSSQRPERSTWNTAG) the composition is skewed to polar residues.

Belongs to the calsyntenin family. Post-translationally, proteolytically processed under normal cellular conditions. A primary zeta-cleavage generates a large extracellular (soluble) N-terminal domain (sAlc) and a short C-terminal transmembrane fragment (CTF1). A secondary cleavage catalyzed by gamma-secretase within the transmembrane domain releases the beta-Alc-gamma chain in the extracellular milieu and produces an intracellular fragment (AlcICD). This processing is strongly suppressed in the tripartite complex formed with APBA2 and APP, which seems to prevent the association with PSEN1.

The protein resides in the postsynaptic cell membrane. The protein localises to the endoplasmic reticulum membrane. Its subcellular location is the golgi apparatus membrane. It is found in the cell projection. It localises to the dendrite. Functionally, postsynaptic adhesion molecule that binds to presynaptic neurexins to mediate synapse formation, and which is involved in learning and memory. Promotes synapse development by acting as a cell adhesion molecule at the postsynaptic membrane, which associates with neurexin-alpha at the presynaptic membrane. In Rattus norvegicus (Rat), this protein is Calsyntenin-2.